Consider the following 228-residue polypeptide: Probable octanoyltransferase (228 aa).

Residues 27–198 enclose the BPL/LPL catalytic domain; it reads SGGDDAFILV…AFEEVFEAKV (172 aa). Substrate contacts are provided by residues 65–72, 129–131, and 142–144; these read RGGDATYH, SIG, and GVA. The Acyl-thioester intermediate role is filled by C160.

The protein belongs to the LipB family.

The protein localises to the cytoplasm. It carries out the reaction octanoyl-[ACP] + L-lysyl-[protein] = N(6)-octanoyl-L-lysyl-[protein] + holo-[ACP] + H(+). The protein operates within protein modification; protein lipoylation via endogenous pathway; protein N(6)-(lipoyl)lysine from octanoyl-[acyl-carrier-protein]: step 1/2. Its function is as follows. Catalyzes the transfer of endogenously produced octanoic acid from octanoyl-acyl-carrier-protein onto the lipoyl domains of lipoate-dependent enzymes. Lipoyl-ACP can also act as a substrate although octanoyl-ACP is likely to be the physiological substrate. The chain is Probable octanoyltransferase from Pyrobaculum calidifontis (strain DSM 21063 / JCM 11548 / VA1).